Reading from the N-terminus, the 233-residue chain is Ribosome maturation factor RimM (233 aa).

The tract at residues 1 to 51 (MKRKQDSKGAGSRGQGAGEKKQGAGGRGQGEKKQKKSPVPSPQSPVPDPDE) is disordered. Over residues 11 to 28 (GSRGQGAGEKKQGAGGRG) the composition is skewed to gly residues. A PRC barrel domain is found at 145-226 (GEDEYHVVDL…RIEITPPPGL (82 aa)).

It belongs to the RimM family. In terms of assembly, binds ribosomal protein uS19.

It localises to the cytoplasm. Functionally, an accessory protein needed during the final step in the assembly of 30S ribosomal subunit, possibly for assembly of the head region. Essential for efficient processing of 16S rRNA. May be needed both before and after RbfA during the maturation of 16S rRNA. It has affinity for free ribosomal 30S subunits but not for 70S ribosomes. This Trichormus variabilis (strain ATCC 29413 / PCC 7937) (Anabaena variabilis) protein is Ribosome maturation factor RimM.